The primary structure comprises 299 residues: tRNA dimethylallyltransferase (299 aa).

Position 22 to 29 (22 to 29 (GPTASGKT)) interacts with ATP. 24-29 (TASGKT) contacts substrate. 2 interaction with substrate tRNA regions span residues 47 to 50 (DSRQ) and 172 to 176 (QRLLR).

This sequence belongs to the IPP transferase family. Monomer. Mg(2+) serves as cofactor.

The enzyme catalyses adenosine(37) in tRNA + dimethylallyl diphosphate = N(6)-dimethylallyladenosine(37) in tRNA + diphosphate. Functionally, catalyzes the transfer of a dimethylallyl group onto the adenine at position 37 in tRNAs that read codons beginning with uridine, leading to the formation of N6-(dimethylallyl)adenosine (i(6)A). The protein is tRNA dimethylallyltransferase of Endomicrobium trichonymphae.